Consider the following 453-residue polypeptide: Ribulose bisphosphate carboxylase large chain (453 aa).

A propeptide spanning residues 1-2 (MS) is cleaved from the precursor. N-acetylproline is present on P3. Position 14 is an N6,N6,N6-trimethyllysine (K14). Residues N123 and T173 each contribute to the substrate site. The active-site Proton acceptor is the K175. Residue K177 participates in substrate binding. K201, D203, and E204 together coordinate Mg(2+). N6-carboxylysine is present on K201. H294 serves as the catalytic Proton acceptor. The substrate site is built by R295, H327, and S379.

The protein belongs to the RuBisCO large chain family. Type I subfamily. In terms of assembly, heterohexadecamer of 8 large chains and 8 small chains; disulfide-linked. The disulfide link is formed within the large subunit homodimers. Mg(2+) is required as a cofactor. Post-translationally, the disulfide bond which can form in the large chain dimeric partners within the hexadecamer appears to be associated with oxidative stress and protein turnover.

Its subcellular location is the plastid. The protein resides in the chloroplast. It catalyses the reaction 2 (2R)-3-phosphoglycerate + 2 H(+) = D-ribulose 1,5-bisphosphate + CO2 + H2O. It carries out the reaction D-ribulose 1,5-bisphosphate + O2 = 2-phosphoglycolate + (2R)-3-phosphoglycerate + 2 H(+). Functionally, ruBisCO catalyzes two reactions: the carboxylation of D-ribulose 1,5-bisphosphate, the primary event in carbon dioxide fixation, as well as the oxidative fragmentation of the pentose substrate in the photorespiration process. Both reactions occur simultaneously and in competition at the same active site. This is Ribulose bisphosphate carboxylase large chain from Phuopsis stylosa (Caucasian crosswort).